Consider the following 441-residue polypeptide: MAGUK p55 subfamily member 4 (441 aa).

The 84-residue stretch at Met1 to Ser84 folds into the PDZ domain. One can recognise an SH3 domain in the interval Gln91–Gln161. In terms of domain architecture, Guanylate kinase-like spans His232–Gln421. Residues Val373–Val430 are a coiled coil.

This sequence belongs to the MAGUK family. As to quaternary structure, interacts with MPDZ. May interact with GRIA2. Forms a complex with CRB1 and PALS1. Interacts with FASLG. In terms of tissue distribution, highly expressed in brain and detected in lung, and bone (at protein level). Also expressed in intestine and spleen.

It is found in the cytoplasm. Functionally, may play a role in retinal photoreceptors development. This Rattus norvegicus (Rat) protein is MAGUK p55 subfamily member 4 (Mpp4).